Consider the following 168-residue polypeptide: Cell division inhibitor SulA (168 aa).

Positions 106–112 (ALLTGNY) are ftsZ binding. The interval 161-168 (KIHSYLYH) is lon protease binding.

Belongs to the SulA family. As to quaternary structure, interacts with FtsZ. In terms of processing, is rapidly cleaved and degraded by the Lon protease once DNA damage is repaired.

In terms of biological role, component of the SOS system and an inhibitor of cell division. Accumulation of SulA causes rapid cessation of cell division and the appearance of long, non-septate filaments. In the presence of GTP, binds a polymerization-competent form of FtsZ in a 1:1 ratio, thus inhibiting FtsZ polymerization and therefore preventing it from participating in the assembly of the Z ring. This mechanism prevents the premature segregation of damaged DNA to daughter cells during cell division. This Yersinia pseudotuberculosis serotype O:1b (strain IP 31758) protein is Cell division inhibitor SulA.